Consider the following 606-residue polypeptide: Thrombospondin-related anonymous protein (606 aa).

The N-terminal stretch at 1–24 (MKLLGNSKYFFVVLLLCISVFLNG) is a signal peptide. In terms of domain architecture, VWFA spans 43–228 (DLHILLDGSG…TMIKPFLSKV (186 aa)). The TSP type-1 domain occupies 235–281 (VALCGKWEEWSECSTTCDNGTKIRKRKVLHPNCAGEMTAPCKVRDCP). The disordered stretch occupies residues 301–541 (PVEPIEPAEP…SKKQSKSNNG (241 aa)). Low complexity-rich tracts occupy residues 409–425 (ENPF…IIAP), 440–450 (ELPNNLPESPS), and 459–479 (PNDN…IPNK). Basic and acidic residues-rich tracts occupy residues 487–504 (NPYK…RSND) and 516–532 (DKLE…ENKS). The helical transmembrane segment at 544–564 (IAGGIIGGLAIIGCIGVGYNF) threads the bilayer.

As to quaternary structure, interacts (via integrin-like A-domain) with Anopheles gambiae saglin/SG1F; the interaction probably promotes sporozoite invasion of salivary gland. Interacts (via integrin-like A-domain) with human AHSG; the interaction promotes sporozoite invasion of hepatocytes and formation of exoerythrocytic forms of parasites in human hepatoma HepG2 cells.

The protein localises to the cell membrane. The protein resides in the cytoplasm. Promotes parasite ability to invade host hepatocytes. Promotes parasite ability to invade mosquito salivary glands. Required for sporozoite gliding motility. The chain is Thrombospondin-related anonymous protein from Plasmodium berghei (strain Anka).